The sequence spans 213 residues: Putative manganese efflux pump MntP (213 aa).

Transmembrane regions (helical) follow at residues isoleucine 3 to alanine 23, alanine 36 to glycine 56, alanine 67 to glutamate 87, leucine 130 to isoleucine 150, isoleucine 152 to isoleucine 172, and isoleucine 187 to isoleucine 207.

Belongs to the MntP (TC 9.B.29) family.

It localises to the cell membrane. Probably functions as a manganese efflux pump. This Clostridium perfringens (strain ATCC 13124 / DSM 756 / JCM 1290 / NCIMB 6125 / NCTC 8237 / Type A) protein is Putative manganese efflux pump MntP.